Here is a 516-residue protein sequence, read N- to C-terminus: Cysteine--tRNA ligase (516 aa).

Cys32 is a binding site for Zn(2+). The 'HIGH' region signature appears at 34 to 44 (PTVYMYAHIGN). The Zn(2+) site is built by Cys230, His255, and Glu259. The 'KMSKS' region motif lies at 287–291 (KMSKS). Lys290 contacts ATP.

It belongs to the class-I aminoacyl-tRNA synthetase family. In terms of assembly, monomer. Zn(2+) is required as a cofactor.

The protein resides in the cytoplasm. The catalysed reaction is tRNA(Cys) + L-cysteine + ATP = L-cysteinyl-tRNA(Cys) + AMP + diphosphate. This chain is Cysteine--tRNA ligase, found in Salinibacter ruber (strain DSM 13855 / M31).